Here is a 481-residue protein sequence, read N- to C-terminus: Phosphoglucosamine mutase (481 aa).

Residue Ser-129 is the Phosphoserine intermediate of the active site. Ser-129, Asp-271, Asp-273, and Asp-275 together coordinate Mg(2+). A Phosphoserine modification is found at Ser-129.

Belongs to the phosphohexose mutase family. The cofactor is Mg(2+). Activated by phosphorylation.

The catalysed reaction is alpha-D-glucosamine 1-phosphate = D-glucosamine 6-phosphate. Functionally, catalyzes the conversion of glucosamine-6-phosphate to glucosamine-1-phosphate. The chain is Phosphoglucosamine mutase from Picosynechococcus sp. (strain ATCC 27264 / PCC 7002 / PR-6) (Agmenellum quadruplicatum).